The chain runs to 129 residues: Small ribosomal subunit protein uS9 (129 aa).

The disordered stretch occupies residues 108 to 129 (RMVERKKYGKKKARKSFQFSKR). Positions 114–129 (KYGKKKARKSFQFSKR) are enriched in basic residues.

Belongs to the universal ribosomal protein uS9 family.

The protein is Small ribosomal subunit protein uS9 of Chlorobaculum tepidum (strain ATCC 49652 / DSM 12025 / NBRC 103806 / TLS) (Chlorobium tepidum).